The following is a 703-amino-acid chain: Polyribonucleotide nucleotidyltransferase (703 aa).

Asp486 and Asp492 together coordinate Mg(2+). Positions 553 to 614 (PRITTIWIKP…AACDAAIQMI (62 aa)) constitute a KH domain. Residues 624–692 (GKLYMGTVKK…KQGKIKLSRK (69 aa)) form the S1 motif domain.

Belongs to the polyribonucleotide nucleotidyltransferase family. Mg(2+) is required as a cofactor.

The protein localises to the cytoplasm. The catalysed reaction is RNA(n+1) + phosphate = RNA(n) + a ribonucleoside 5'-diphosphate. Involved in mRNA degradation. Catalyzes the phosphorolysis of single-stranded polyribonucleotides processively in the 3'- to 5'-direction. In Trichlorobacter lovleyi (strain ATCC BAA-1151 / DSM 17278 / SZ) (Geobacter lovleyi), this protein is Polyribonucleotide nucleotidyltransferase.